The primary structure comprises 215 residues: ER lumen protein-retaining receptor B (215 aa).

Helical transmembrane passes span 6–26 (LAGD…IHTI), 55–77 (FVSL…IVWY), 98–118 (WFLV…FTFL), 120–140 (VLWT…LVLL), 149–169 (LTGQ…LNWI), and 178–198 (FVHW…ADFF).

It belongs to the ERD2 family.

The protein localises to the golgi apparatus membrane. The protein resides in the endoplasmic reticulum membrane. In terms of biological role, determines the specificity of the luminal endoplasmic reticulum protein retention system. Required for the retro-transport of calreticulin-3 (CRT3) from the Golgi to the ER. Specifically required for elongation factor Tu receptor (EFR) function in response to the pathogen-associated molecular pattern (PAMP) elf18. The chain is ER lumen protein-retaining receptor B (ERD2B) from Arabidopsis thaliana (Mouse-ear cress).